A 430-amino-acid polypeptide reads, in one-letter code: GTPase Obg (430 aa).

An Obg domain is found at 1-158 (MFVDQVKISL…LEVTLELKLL (158 aa)). The tract at residues 118-145 (RGGRGGRGNSRFATPRNPAPDFSENGEP) is disordered. The OBG-type G domain maps to 159-329 (ADVGLVGFPS…LLYQIADKLE (171 aa)). Residues 165 to 172 (GFPSVGKS), 190 to 194 (FTTIK), 212 to 215 (DLPG), 282 to 285 (NKMD), and 310 to 312 (STI) contribute to the GTP site. Ser172 and Thr192 together coordinate Mg(2+). The OCT domain maps to 352 to 430 (KHTPSADKFT…ILGGEFEFVE (79 aa)).

The protein belongs to the TRAFAC class OBG-HflX-like GTPase superfamily. OBG GTPase family. As to quaternary structure, monomer. Mg(2+) is required as a cofactor.

The protein localises to the cytoplasm. An essential GTPase which binds GTP, GDP and possibly (p)ppGpp with moderate affinity, with high nucleotide exchange rates and a fairly low GTP hydrolysis rate. Plays a role in control of the cell cycle, stress response, ribosome biogenesis and in those bacteria that undergo differentiation, in morphogenesis control. This Staphylococcus epidermidis (strain ATCC 12228 / FDA PCI 1200) protein is GTPase Obg.